A 467-amino-acid polypeptide reads, in one-letter code: Signal transduction histidine-protein kinase BaeS (467 aa).

Residues 1–11 (MKFWRPGITGK) lie on the Cytoplasmic side of the membrane. Residues 12–32 (LFLAIFATCIVLLISMHWAVR) form a helical membrane-spanning segment. At 33 to 167 (ISFERGFIDY…NFDKQQRQTS (135 aa)) the chain is on the periplasmic side. A helical transmembrane segment spans residues 168 to 186 (WLIVALATLLAALATFLLA). One can recognise an HAMP domain in the interval 187–239 (RGLLAPVKRLVDGTHKLAAGDFTTRVTPTSEDELGKLAQDFNQLASTLEKNQQ). The Cytoplasmic portion of the chain corresponds to 187-467 (RGLLAPVKRL…PLERDLQREV (281 aa)). A Histidine kinase domain is found at 247 to 461 (DISHELRTPL…SITVELPLER (215 aa)). A Phosphohistidine; by autocatalysis modification is found at His-250.

Autophosphorylated.

The protein resides in the cell inner membrane. The catalysed reaction is ATP + protein L-histidine = ADP + protein N-phospho-L-histidine.. Functionally, member of the two-component regulatory system BaeS/BaeR which responds to envelope stress. Activates expression of periplasmic chaperone spy in response to spheroplast formation, indole and P pili protein PapG overexpression. Activates BaeR by phosphorylation which then activates the mdtABCD and probably the CRISPR-Cas casABCDE-ygbT-ygbF operons. This chain is Signal transduction histidine-protein kinase BaeS, found in Escherichia coli (strain K12).